A 415-amino-acid chain; its full sequence is L-cysteine:1D-myo-inositol 2-amino-2-deoxy-alpha-D-glucopyranoside ligase 2 (415 aa).

Residue cysteine 44 participates in Zn(2+) binding. L-cysteinyl-5'-AMP is bound by residues 44–47 (CGIT), threonine 59, and 82–84 (NIT). A 'HIGH' region motif is present at residues 46–56 (ITPYDSTHLGH). The 'ERGGDP' region signature appears at 188 to 193 (ERGGDP). Residue tryptophan 228 coordinates L-cysteinyl-5'-AMP. Residue cysteine 232 coordinates Zn(2+). 250–252 (GSD) is an L-cysteinyl-5'-AMP binding site. Histidine 257 lines the Zn(2+) pocket. Position 284 (isoleucine 284) interacts with L-cysteinyl-5'-AMP. The 'KMSKS' region motif lies at 290-294 (KMSKS).

Belongs to the class-I aminoacyl-tRNA synthetase family. MshC subfamily. In terms of assembly, monomer. Zn(2+) serves as cofactor.

It catalyses the reaction 1D-myo-inositol 2-amino-2-deoxy-alpha-D-glucopyranoside + L-cysteine + ATP = 1D-myo-inositol 2-(L-cysteinylamino)-2-deoxy-alpha-D-glucopyranoside + AMP + diphosphate + H(+). In terms of biological role, catalyzes the ATP-dependent condensation of GlcN-Ins and L-cysteine to form L-Cys-GlcN-Ins. The protein is L-cysteine:1D-myo-inositol 2-amino-2-deoxy-alpha-D-glucopyranoside ligase 2 of Corynebacterium jeikeium (strain K411).